The following is a 499-amino-acid chain: Cytochrome P450 81E8 (499 aa).

A helical membrane pass occupies residues 3–23 (TFYLSLIISLFFLIITLKVFF). Residue Cys436 coordinates heme.

This sequence belongs to the cytochrome P450 family. It depends on heme as a cofactor.

The protein resides in the membrane. Probable monooxygenases exhibiting no activity with isoflavones such as formononetin, biochanin A, pseudobaptigenin, daidzein, genistein, isoformononetin and prunetin, or with flavonoids including naringenin, liquiritigenin, apigenin, luteolin, or kaempferol. This chain is Cytochrome P450 81E8, found in Medicago truncatula (Barrel medic).